The following is a 192-amino-acid chain: Small ribosomal subunit protein uS5 (192 aa).

The 64-residue stretch at 22 to 85 folds into the S5 DRBM domain; the sequence is LVDKLVTINR…DRAKRAMIRV (64 aa).

Belongs to the universal ribosomal protein uS5 family. In terms of assembly, part of the 30S ribosomal subunit. Contacts proteins S4 and S8.

Its function is as follows. With S4 and S12 plays an important role in translational accuracy. Functionally, located at the back of the 30S subunit body where it stabilizes the conformation of the head with respect to the body. In Gluconacetobacter diazotrophicus (strain ATCC 49037 / DSM 5601 / CCUG 37298 / CIP 103539 / LMG 7603 / PAl5), this protein is Small ribosomal subunit protein uS5.